A 162-amino-acid chain; its full sequence is Endoribonuclease YbeY (162 aa).

The Zn(2+) site is built by His-117, His-121, and His-127.

The protein belongs to the endoribonuclease YbeY family. Zn(2+) serves as cofactor.

It localises to the cytoplasm. Its function is as follows. Single strand-specific metallo-endoribonuclease involved in late-stage 70S ribosome quality control and in maturation of the 3' terminus of the 16S rRNA. The chain is Endoribonuclease YbeY from Francisella tularensis subsp. novicida (strain U112).